The sequence spans 752 residues: GTPase-activating protein rrc-1 (752 aa).

The region spanning 165–244 is the SH3 domain; the sequence is PAIAAAVVTK…PRDCVMLIDD (80 aa). In terms of domain architecture, Rho-GAP spans 281–463; it reads LELTELFMRT…FCIENSDSLF (183 aa). Disordered stretches follow at residues 523–552 and 582–609; these read STGELCGSPPSEVKWRSRSTRSHSTDATFQ and RSMRPTSRPPPSPRTRRARFSNGGGANN.

In terms of biological role, functions as a GTPase-activating protein (GAP) for ced-10/RAC-1 and CDC42. This is GTPase-activating protein rrc-1 from Caenorhabditis briggsae.